Consider the following 417-residue polypeptide: Gamma-glutamyl phosphate reductase (417 aa).

Belongs to the gamma-glutamyl phosphate reductase family.

The protein resides in the cytoplasm. It catalyses the reaction L-glutamate 5-semialdehyde + phosphate + NADP(+) = L-glutamyl 5-phosphate + NADPH + H(+). The protein operates within amino-acid biosynthesis; L-proline biosynthesis; L-glutamate 5-semialdehyde from L-glutamate: step 2/2. Its function is as follows. Catalyzes the NADPH-dependent reduction of L-glutamate 5-phosphate into L-glutamate 5-semialdehyde and phosphate. The product spontaneously undergoes cyclization to form 1-pyrroline-5-carboxylate. The chain is Gamma-glutamyl phosphate reductase from Haemophilus influenzae (strain ATCC 51907 / DSM 11121 / KW20 / Rd).